The following is a 173-amino-acid chain: Superoxide dismutase [Cu-Zn] (173 aa).

An N-terminal signal peptide occupies residues 1–19 (MKSLFIASTMVLMAFPAFA). Positions 67, 69, and 92 each coordinate Cu cation. Cys-74 and Cys-169 are disulfide-bonded. Residues His-92, His-101, His-109, and Asp-112 each coordinate Zn(2+). Cu cation is bound at residue His-147.

It belongs to the Cu-Zn superoxide dismutase family. In terms of assembly, homodimer. Cu cation serves as cofactor. Zn(2+) is required as a cofactor.

It localises to the periplasm. It catalyses the reaction 2 superoxide + 2 H(+) = H2O2 + O2. Destroys radicals which are normally produced within the cells and which are toxic to biological systems. In Brucella abortus biovar 1 (strain 9-941), this protein is Superoxide dismutase [Cu-Zn] (sodC).